Reading from the N-terminus, the 340-residue chain is Delta(1)-pyrroline-2-carboxylate reductase 1 (340 aa).

Serine 50 acts as the Charge relay system in catalysis. The active-site Proton donor is histidine 51. Residue arginine 55 coordinates substrate. 123-127 (HFSAL) provides a ligand contact to NADP(+). Residue threonine 163 participates in substrate binding. Residue 181 to 183 (DFA) participates in NADP(+) binding. 189-190 (RG) is a substrate binding site. Aspartate 191 acts as the Charge relay system in catalysis. NADP(+) is bound by residues 232–233 (HK) and 307–313 (RLPSQRR).

It belongs to the LDH2/MDH2 oxidoreductase family. In terms of assembly, homodimer.

The catalysed reaction is L-proline + NAD(+) = 1-pyrroline-2-carboxylate + NADH + H(+). It catalyses the reaction L-proline + NADP(+) = 1-pyrroline-2-carboxylate + NADPH + H(+). Functionally, catalyzes the reduction of Delta(1)-pyrroline-2-carboxylate (Pyr2C) to L-proline, using NADPH as the electron donor. May be involved in a degradation pathway that converts trans-3-hydroxy-L-proline (t3LHyp) to L-proline. The polypeptide is Delta(1)-pyrroline-2-carboxylate reductase 1 (Burkholderia ambifaria (strain ATCC BAA-244 / DSM 16087 / CCUG 44356 / LMG 19182 / AMMD) (Burkholderia cepacia (strain AMMD))).